The sequence spans 337 residues: G-protein coupled receptor 26 (337 aa).

The Extracellular portion of the chain corresponds to 1-10 (MNSWDAGLAG). A helical membrane pass occupies residues 11-31 (LLVGTIGVSLLSNGLVLLCLL). Over 32–47 (HSADIRRQAPALFTLN) the chain is Cytoplasmic. The helical transmembrane segment at 48–68 (LTCGNLLCTVVNMPLTLAGVV) threads the bilayer. The Extracellular portion of the chain corresponds to 69–81 (AQRQPAGDRLCRL). Cys79 and Cys156 are disulfide-bonded. A helical transmembrane segment spans residues 82–102 (AAFLDTFLAANSMLSMAALSI). Over 103 to 123 (DRWVAVVFPLSYRAKMRLRDA) the chain is Cytoplasmic. A helical transmembrane segment spans residues 124–144 (AFMVAYTWLHALTFPATALAL). At 145 to 168 (SWLGFHQLYASCTLCSRRPDERLR) the chain is on the extracellular side. The chain crosses the membrane as a helical span at residues 169 to 189 (FAVFTSAFHALSFLLSFIVLC). The Cytoplasmic segment spans residues 190-245 (FTYLKVLKVARFHCKRIDVITMQTLVLLVDIHPSVRERCLEEQKRRRQRATKKIST). A helical membrane pass occupies residues 246–266 (FIGTFLVCFAPYVITRLVELF). The Extracellular segment spans residues 267–276 (STAPIGSHWG). Residues 277–297 (VLSKCLAYSKAASDPFVYSLL) form a helical membrane-spanning segment. Over 298 to 337 (RHQYRRSCKELLNRIFNRRSLHSVGLTGDSHSQNILPVSE) the chain is Cytoplasmic.

This sequence belongs to the G-protein coupled receptor 1 family. As to expression, exclusively expressed in the brain. Prominent expression is detected throughout the entire neocortex at all rostrocaudal and dorsoventral levels. Strong expression is detected in olfactory and auditory sensory areas.

The protein resides in the cell membrane. In terms of biological role, orphan receptor. Displays a significant level of constitutive activity. Its effect is mediated by G(s)-alpha protein that stimulate adenylate cyclase, resulting in an elevation of intracellular cAMP. The protein is G-protein coupled receptor 26 (Gpr26) of Mus musculus (Mouse).